Consider the following 311-residue polypeptide: Malate dehydrogenase (311 aa).

NAD(+) is bound by residues 7–13 (GAAGGIG) and aspartate 34. Substrate contacts are provided by arginine 81 and arginine 87. NAD(+) is bound by residues asparagine 94 and 117-119 (ITN). Residues asparagine 119 and arginine 153 each contribute to the substrate site. Histidine 177 acts as the Proton acceptor in catalysis. Methionine 227 contributes to the NAD(+) binding site.

It belongs to the LDH/MDH superfamily. MDH type 1 family. Homodimer.

The enzyme catalyses (S)-malate + NAD(+) = oxaloacetate + NADH + H(+). Catalyzes the reversible oxidation of malate to oxaloacetate. This is Malate dehydrogenase from Aeromonas hydrophila subsp. hydrophila (strain ATCC 7966 / DSM 30187 / BCRC 13018 / CCUG 14551 / JCM 1027 / KCTC 2358 / NCIMB 9240 / NCTC 8049).